A 944-amino-acid polypeptide reads, in one-letter code: 2-oxoglutarate dehydrogenase E1 component (944 aa).

Residues 918–944 (SSTAEGDPTVHKKEQERIVSDSLTRKN) form a disordered region. Residues 925–936 (PTVHKKEQERIV) show a composition bias toward basic and acidic residues.

The protein belongs to the alpha-ketoglutarate dehydrogenase family. Homodimer. Part of the 2-oxoglutarate dehydrogenase (OGDH) complex composed of E1 (2-oxoglutarate dehydrogenase), E2 (dihydrolipoamide succinyltransferase) and E3 (dihydrolipoamide dehydrogenase); the complex contains multiple copies of the three enzymatic components (E1, E2 and E3). Requires thiamine diphosphate as cofactor.

The catalysed reaction is N(6)-[(R)-lipoyl]-L-lysyl-[protein] + 2-oxoglutarate + H(+) = N(6)-[(R)-S(8)-succinyldihydrolipoyl]-L-lysyl-[protein] + CO2. In terms of biological role, E1 component of the 2-oxoglutarate dehydrogenase (OGDH) complex which catalyzes the decarboxylation of 2-oxoglutarate, the first step in the conversion of 2-oxoglutarate to succinyl-CoA and CO(2). This Bacillus pumilus (strain SAFR-032) protein is 2-oxoglutarate dehydrogenase E1 component.